A 131-amino-acid chain; its full sequence is Universal stress protein C (131 aa).

The protein belongs to the universal stress protein A family.

The protein resides in the cytoplasm. In terms of biological role, required for resistance to DNA-damaging agents. This chain is Universal stress protein C (uspC), found in Salmonella typhi.